The sequence spans 691 residues: DNA ligase (691 aa).

NAD(+) is bound by residues Asp-41–Asp-45, Ser-90–Leu-91, and Glu-130. Residue Lys-132 is the N6-AMP-lysine intermediate of the active site. 4 residues coordinate NAD(+): Arg-153, Glu-190, Lys-307, and Lys-331. Residues Cys-425, Cys-428, Cys-443, and Cys-449 each contribute to the Zn(2+) site. The region spanning Ala-610 to Arg-691 is the BRCT domain.

Belongs to the NAD-dependent DNA ligase family. LigA subfamily. Mg(2+) serves as cofactor. Mn(2+) is required as a cofactor.

It carries out the reaction NAD(+) + (deoxyribonucleotide)n-3'-hydroxyl + 5'-phospho-(deoxyribonucleotide)m = (deoxyribonucleotide)n+m + AMP + beta-nicotinamide D-nucleotide.. In terms of biological role, DNA ligase that catalyzes the formation of phosphodiester linkages between 5'-phosphoryl and 3'-hydroxyl groups in double-stranded DNA using NAD as a coenzyme and as the energy source for the reaction. It is essential for DNA replication and repair of damaged DNA. In Burkholderia pseudomallei (strain 1106a), this protein is DNA ligase.